A 98-amino-acid polypeptide reads, in one-letter code: Small ribosomal subunit protein bS18 (98 aa).

This sequence belongs to the bacterial ribosomal protein bS18 family. In terms of assembly, part of the 30S ribosomal subunit. Forms a tight heterodimer with protein bS6.

In terms of biological role, binds as a heterodimer with protein bS6 to the central domain of the 16S rRNA, where it helps stabilize the platform of the 30S subunit. This Flavobacterium johnsoniae (strain ATCC 17061 / DSM 2064 / JCM 8514 / BCRC 14874 / CCUG 350202 / NBRC 14942 / NCIMB 11054 / UW101) (Cytophaga johnsonae) protein is Small ribosomal subunit protein bS18.